The primary structure comprises 226 residues: Octanoyltransferase (226 aa).

The 179-residue stretch at 34–212 folds into the BPL/LPL catalytic domain; that stretch reads LAAPDVLLTL…AFSRVFGLEF (179 aa). Residues 76-83, 143-145, and 156-158 each bind substrate; these read RGGDVTYH, AIG, and GIA. C174 acts as the Acyl-thioester intermediate in catalysis.

Belongs to the LipB family.

The protein resides in the cytoplasm. The catalysed reaction is octanoyl-[ACP] + L-lysyl-[protein] = N(6)-octanoyl-L-lysyl-[protein] + holo-[ACP] + H(+). Its pathway is protein modification; protein lipoylation via endogenous pathway; protein N(6)-(lipoyl)lysine from octanoyl-[acyl-carrier-protein]: step 1/2. In terms of biological role, catalyzes the transfer of endogenously produced octanoic acid from octanoyl-acyl-carrier-protein onto the lipoyl domains of lipoate-dependent enzymes. Lipoyl-ACP can also act as a substrate although octanoyl-ACP is likely to be the physiological substrate. This chain is Octanoyltransferase, found in Thermosynechococcus vestitus (strain NIES-2133 / IAM M-273 / BP-1).